Reading from the N-terminus, the 277-residue chain is 2-dehydro-3-deoxyphosphooctonate aldolase (277 aa).

The protein belongs to the KdsA family.

It is found in the cytoplasm. It carries out the reaction D-arabinose 5-phosphate + phosphoenolpyruvate + H2O = 3-deoxy-alpha-D-manno-2-octulosonate-8-phosphate + phosphate. The protein operates within carbohydrate biosynthesis; 3-deoxy-D-manno-octulosonate biosynthesis; 3-deoxy-D-manno-octulosonate from D-ribulose 5-phosphate: step 2/3. Its pathway is bacterial outer membrane biogenesis; lipopolysaccharide biosynthesis. This chain is 2-dehydro-3-deoxyphosphooctonate aldolase, found in Brucella melitensis biotype 2 (strain ATCC 23457).